The primary structure comprises 575 residues: Urease subunit alpha (575 aa).

Residues 137–575 form the Urease domain; it reads GGIDCHIHFI…LPMTQRYFLF (439 aa). Ni(2+) is bound by residues His142, His144, and Lys225. The residue at position 225 (Lys225) is an N6-carboxylysine. His227 contacts substrate. Positions 254 and 280 each coordinate Ni(2+). The Proton donor role is filled by His328. Asp368 provides a ligand contact to Ni(2+).

Belongs to the metallo-dependent hydrolases superfamily. Urease alpha subunit family. In terms of assembly, heterotrimer of UreA (gamma), UreB (beta) and UreC (alpha) subunits. Three heterotrimers associate to form the active enzyme. The cofactor is Ni cation. Post-translationally, carboxylation allows a single lysine to coordinate two nickel ions.

The protein localises to the cytoplasm. The catalysed reaction is urea + 2 H2O + H(+) = hydrogencarbonate + 2 NH4(+). The protein operates within nitrogen metabolism; urea degradation; CO(2) and NH(3) from urea (urease route): step 1/1. This chain is Urease subunit alpha, found in Methylibium petroleiphilum (strain ATCC BAA-1232 / LMG 22953 / PM1).